We begin with the raw amino-acid sequence, 318 residues long: Acetyl-coenzyme A carboxylase carboxyl transferase subunit alpha (318 aa).

One can recognise a CoA carboxyltransferase C-terminal domain in the interval 36–293 (EIDRLKEKST…KTRLSEQLDQ (258 aa)).

This sequence belongs to the AccA family. In terms of assembly, acetyl-CoA carboxylase is a heterohexamer composed of biotin carboxyl carrier protein (AccB), biotin carboxylase (AccC) and two subunits each of ACCase subunit alpha (AccA) and ACCase subunit beta (AccD).

The protein localises to the cytoplasm. It catalyses the reaction N(6)-carboxybiotinyl-L-lysyl-[protein] + acetyl-CoA = N(6)-biotinyl-L-lysyl-[protein] + malonyl-CoA. It functions in the pathway lipid metabolism; malonyl-CoA biosynthesis; malonyl-CoA from acetyl-CoA: step 1/1. In terms of biological role, component of the acetyl coenzyme A carboxylase (ACC) complex. First, biotin carboxylase catalyzes the carboxylation of biotin on its carrier protein (BCCP) and then the CO(2) group is transferred by the carboxyltransferase to acetyl-CoA to form malonyl-CoA. This Teredinibacter turnerae (strain ATCC 39867 / T7901) protein is Acetyl-coenzyme A carboxylase carboxyl transferase subunit alpha.